We begin with the raw amino-acid sequence, 576 residues long: Low-affinity glucose transporter HXT4 (576 aa).

Residues Met1–Asn56 are disordered. Residues Met1–Ser66 are Cytoplasmic-facing. A compositionally biased stretch (polar residues) spans Glu25–Asn37. Basic and acidic residues predominate over residues Lys38–Ser54. Residue Lys45 forms a Glycyl lysine isopeptide (Lys-Gly) (interchain with G-Cter in ubiquitin) linkage. The chain crosses the membrane as a helical span at residues Ala67–Trp87. Residues Asp88–Gly122 lie on the Extracellular side of the membrane. The chain crosses the membrane as a helical span at residues Leu123–Gly143. Residues Asp144 to Lys149 are Cytoplasmic-facing. Residues Met150–Ile170 form a helical membrane-spanning segment. Over Asn171 to Arg180 the chain is Extracellular. The chain crosses the membrane as a helical span at residues Ile181–Val201. Residues Ser202–Arg207 are Cytoplasmic-facing. A helical membrane pass occupies residues Gly208–Thr228. Residues Asn229–Arg242 lie on the Extracellular side of the membrane. Residues Val243–Pro263 form a helical membrane-spanning segment. The Cytoplasmic segment spans residues Glu264–Asp346. A helical transmembrane segment spans residues Asn347–Glu363. The Extracellular segment spans residues Asp364–Ser369. The helical transmembrane segment at Ile370–Val387 threads the bilayer. The Cytoplasmic segment spans residues Glu388 to Arg394. A helical transmembrane segment spans residues Cys395–Val415. Topologically, residues Thr416 to Val437 are extracellular. Asn425 is a glycosylation site (N-linked (GlcNAc...) asparagine). A helical transmembrane segment spans residues Phe438–Asn458. At Ser459–Gln475 the chain is on the cytoplasmic side. The helical transmembrane segment at Ala476–Ile496 threads the bilayer. Position 497 (Asp497) is a topological domain, extracellular. A helical transmembrane segment spans residues Phe498 to Phe518. Topologically, residues Val519–Lys576 are cytoplasmic.

This sequence belongs to the major facilitator superfamily. Sugar transporter (TC 2.A.1.1) family.

The protein localises to the cell membrane. With respect to regulation, xylose uptake is strongly inhibited by glucose. Functionally, low-affinity glucose transporter. Can also transport xylose. This chain is Low-affinity glucose transporter HXT4 (HXT4), found in Saccharomyces cerevisiae (strain ATCC 204508 / S288c) (Baker's yeast).